Consider the following 171-residue polypeptide: MKFALVLLGFCAFYLVNATGDLETELEASDLQELQEALDLIAETPLESLEAEELEEARKFKFPKINWGKLASKAKDVYKKGQKLAKNKNVKKALKYGKQLAENLAAGEVHEPGTPVGNNKCWAIGTRCTDDCDCCPEHHCHCPAKSWTFGLIPCSCQVTESDKVNKCPPAE.

An N-terminal signal peptide occupies residues 1-18 (MKFALVLLGFCAFYLVNA). The propeptide at 19-58 (TGDLETELEASDLQELQEALDLIAETPLESLEAEELEEAR) is removed in mature form. Positions 59–104 (KFKFPKINWGKLASKAKDVYKKGQKLAKNKNVKKALKYGKQLAENL) are linear cationic cytotoxin domain. Positions 118 to 171 (NNKCWAIGTRCTDDCDCCPEHHCHCPAKSWTFGLIPCSCQVTESDKVNKCPPAE) constitute an Oxytoxin-type inhibitor cystine knot (ICK) domain. Disulfide bonds link cysteine 121-cysteine 135, cysteine 128-cysteine 140, cysteine 132-cysteine 167, cysteine 134-cysteine 156, and cysteine 142-cysteine 154.

Belongs to the spiderine family. Cationic/spiderine subfamily. In terms of tissue distribution, expressed by the venom gland.

It is found in the secreted. In terms of biological role, has antimicrobial, insecticidal, cytolytic and cytotoxic activity. The protein is Spiderine-2b of Oxyopes takobius (Lynx spider).